The primary structure comprises 324 residues: dITP/XTP pyrophosphatase (324 aa).

Residues 1–127 (MTKTIFESKT…KNDNNFGDTI (127 aa)) form a unknown region. The interval 128-324 (LIATHNEGKT…EVFPKWQLEN (197 aa)) is NTP pyrophosphatase. 131 to 136 (THNEGK) provides a ligand contact to substrate. The Mg(2+) site is built by Glu-164 and Asp-193. The active-site Proton acceptor is the Asp-193. Residues Ser-194, 277–280 (FGYD), Lys-300, and 305–306 (HR) each bind substrate.

It belongs to the HAM1 NTPase family. As to quaternary structure, homodimer. Mg(2+) is required as a cofactor.

The enzyme catalyses XTP + H2O = XMP + diphosphate + H(+). The catalysed reaction is dITP + H2O = dIMP + diphosphate + H(+). It catalyses the reaction ITP + H2O = IMP + diphosphate + H(+). Functionally, pyrophosphatase that catalyzes the hydrolysis of nucleoside triphosphates to their monophosphate derivatives, with a high preference for the non-canonical purine nucleotides XTP (xanthosine triphosphate), dITP (deoxyinosine triphosphate) and ITP. Seems to function as a house-cleaning enzyme that removes non-canonical purine nucleotides from the nucleotide pool, thus preventing their incorporation into DNA/RNA and avoiding chromosomal lesions. This Streptococcus agalactiae serotype III (strain NEM316) protein is dITP/XTP pyrophosphatase.